The sequence spans 340 residues: Biotin synthase (340 aa).

Residues 53–280 enclose the Radical SAM core domain; that stretch reads SAIQLSSLLS…LARVRLSAGR (228 aa). The [4Fe-4S] cluster site is built by Cys-68, Cys-72, and Cys-75. Positions 112, 143, 203, and 275 each coordinate [2Fe-2S] cluster.

This sequence belongs to the radical SAM superfamily. Biotin synthase family. Homodimer. [4Fe-4S] cluster serves as cofactor. Requires [2Fe-2S] cluster as cofactor.

The catalysed reaction is (4R,5S)-dethiobiotin + (sulfur carrier)-SH + 2 reduced [2Fe-2S]-[ferredoxin] + 2 S-adenosyl-L-methionine = (sulfur carrier)-H + biotin + 2 5'-deoxyadenosine + 2 L-methionine + 2 oxidized [2Fe-2S]-[ferredoxin]. It participates in cofactor biosynthesis; biotin biosynthesis; biotin from 7,8-diaminononanoate: step 2/2. Functionally, catalyzes the conversion of dethiobiotin (DTB) to biotin by the insertion of a sulfur atom into dethiobiotin via a radical-based mechanism. The polypeptide is Biotin synthase (Bordetella petrii (strain ATCC BAA-461 / DSM 12804 / CCUG 43448)).